The sequence spans 1227 residues: Multifunctional 2-oxoglutarate metabolism enzyme (1227 aa).

Positions 1–41 (MSSSPSPFGQNEWLVEEMYRKFRDDPSSVDPSWHEFLVDYS) are 2-oxoglutarate dehydrogenase E1, N-terminal part. Basic and acidic residues predominate over residues 23-37 (RDDPSSVDPSWHEFL). Residues 23–102 (RDDPSSVDPS…SATPAKGDES (80 aa)) form a disordered region. The segment at 42-88 (PEPTTDSASNGRTTTAAPVTPPTPAPAPAPEPKAAPKPAAKTEAKPA) is linker. Residues 43–53 (EPTTDSASNGR) show a composition bias toward polar residues. Over residues 60 to 76 (VTPPTPAPAPAPEPKAA) the composition is skewed to pro residues. The segment covering 88-97 (AKPAKSATPA) has biased composition (low complexity). Residues 89–335 (KPAKSATPAK…LRTIHQLLLD (247 aa)) form a succinyltransferase E2 region. H314 (proton acceptor; for succinyltransferase activity) is an active-site residue. The tract at residues 336 to 1227 (DDFFDEIFRE…QQEILDTAFG (892 aa)) is 2-oxoglutarate dehydrogenase E1, C-terminal part. R540 serves as a coordination point for thiamine diphosphate. Positions 579 and 604 each coordinate 2-oxoglutarate. Thiamine diphosphate-binding residues include S604, L606, D645, A646, A647, and N678. D645 contacts Mg(2+). Positions 678 and 680 each coordinate Mg(2+). The stretch at 783–814 (DISMKEAEDALRDYQGQLERVFNEVRELEKHE) forms a coiled coil. Residue H1020 participates in 2-oxoglutarate binding. Positions 1038, 1054, 1089, 1092, 1142, 1149, and 1150 each coordinate acetyl-CoA.

The protein belongs to the 2-oxoacid dehydrogenase family. Kgd subfamily. As to quaternary structure, homodimer. Interacts with the FHA domain of unphosphorylated GarA. The 2-oxoglutarate dehydrogenase (ODH) complex contains multiple copies of three enzymatic components: 2-oxoglutarate dehydrogenase (E1), dihydrolipoamide succinyltransferase (E2) and lipoamide dehydrogenase (E3). It depends on Mg(2+) as a cofactor. The cofactor is thiamine diphosphate.

It catalyses the reaction glyoxylate + 2-oxoglutarate + H(+) = 2-hydroxy-3-oxoadipate + CO2. It carries out the reaction 2-oxoglutarate + H(+) = succinate semialdehyde + CO2. The catalysed reaction is N(6)-[(R)-lipoyl]-L-lysyl-[protein] + 2-oxoglutarate + H(+) = N(6)-[(R)-S(8)-succinyldihydrolipoyl]-L-lysyl-[protein] + CO2. The enzyme catalyses N(6)-[(R)-dihydrolipoyl]-L-lysyl-[protein] + succinyl-CoA = N(6)-[(R)-S(8)-succinyldihydrolipoyl]-L-lysyl-[protein] + CoA. It functions in the pathway carbohydrate metabolism; tricarboxylic acid cycle; succinate from 2-oxoglutarate (transferase route): step 1/2. It participates in carbohydrate metabolism; tricarboxylic acid cycle; succinyl-CoA from 2-oxoglutarate (dehydrogenase route): step 1/1. With respect to regulation, alpha-ketoglutarate dehydrogenase and decarboxylase activities are inhibited by unphosphorylated GarA, and allosterically activated by acetyl-CoA, the main substrate of the TCA cycle. Both the phosphoadenosine and acetyl moieties of acetyl-CoA are important for activation because neither CoA nor the synthetic compound S-(2-acetamidoethyl)-ethanethioate (which mimics the terminal acetyl-phosphopantetheine group of acetyl-CoA) has an activation effect. Functionally, shows three enzymatic activities that share a first common step, the attack of thiamine-PP on 2-oxoglutarate (alpha-ketoglutarate, KG), leading to the formation of an enamine-thiamine-PP intermediate upon decarboxylation. Thus, displays KGD activity, catalyzing the decarboxylation from five-carbon 2-oxoglutarate to four-carbon succinate semialdehyde (SSA). Also catalyzes C-C bond formation between the activated aldehyde formed after decarboxylation of alpha-ketoglutarate and the carbonyl of glyoxylate (GLX), to yield 2-hydroxy-3-oxoadipate (HOA), which spontaneously decarboxylates to form 5-hydroxylevulinate (HLA). And is also a component of the 2-oxoglutarate dehydrogenase (ODH) complex, that catalyzes the overall conversion of 2-oxoglutarate to succinyl-CoA and CO(2). The KG decarboxylase and KG dehydrogenase reactions provide two alternative, tightly regulated, pathways connecting the oxidative and reductive branches of the TCA cycle. The protein is Multifunctional 2-oxoglutarate metabolism enzyme (kgd) of Mycolicibacterium smegmatis (strain ATCC 700084 / mc(2)155) (Mycobacterium smegmatis).